The following is a 651-amino-acid chain: UvrABC system protein C (651 aa).

Positions 21–100 (TEPGCYLMRD…IKNQQPHFNV (80 aa)) constitute a GIY-YIG domain. Residues 210-245 (DELRQLLNQQMERYAERLDFESAARIRDQLQGIDQL) form the UVR domain.

It belongs to the UvrC family. As to quaternary structure, interacts with UvrB in an incision complex.

The protein localises to the cytoplasm. The UvrABC repair system catalyzes the recognition and processing of DNA lesions. UvrC both incises the 5' and 3' sides of the lesion. The N-terminal half is responsible for the 3' incision and the C-terminal half is responsible for the 5' incision. This chain is UvrABC system protein C, found in Synechococcus sp. (strain CC9311).